Reading from the N-terminus, the 132-residue chain is Small ribosomal subunit protein uS11 (132 aa).

It belongs to the universal ribosomal protein uS11 family. Part of the 30S ribosomal subunit. Interacts with proteins S7 and S18. Binds to IF-3.

Located on the platform of the 30S subunit, it bridges several disparate RNA helices of the 16S rRNA. Forms part of the Shine-Dalgarno cleft in the 70S ribosome. This is Small ribosomal subunit protein uS11 from Leifsonia xyli subsp. xyli (strain CTCB07).